Here is a 249-residue protein sequence, read N- to C-terminus: DNA repair protein RecO (249 aa).

The protein belongs to the RecO family.

Involved in DNA repair and RecF pathway recombination. This Exiguobacterium sp. (strain ATCC BAA-1283 / AT1b) protein is DNA repair protein RecO.